The chain runs to 413 residues: Cyclic AMP-dependent transcription factor ATF-7 (413 aa).

The transactivation domain stretch occupies residues 1–285 (MGDDRPFVCS…GMVVGTASTM (285 aa)). The segment at 7-31 (FVCSAPGCGQRFTNEDHLAVHKHKH) adopts a C2H2-type zinc-finger fold. Residue Thr51 is modified to Phosphothreonine; by MAPK11. A phosphothreonine mark is found at Thr53 and Thr101. 2 disordered regions span residues 81–140 (ASDD…TTKP) and 299–337 (HPDAPSPAQPQVSPAQPTPSTGGRRRRTVDEDPDERRQR). Residue Lys107 forms a Glycyl lysine isopeptide (Lys-Gly) (interchain with G-Cter in SUMO1) linkage. Composition is skewed to low complexity over residues 114-126 (VDSSPPDSPASSP) and 307-320 (QPQVSPAQPTPSTG). The segment covering 326–337 (TVDEDPDERRQR) has biased composition (basic and acidic residues). Residues 332–395 (DERRQRFLER…AQLKQLLLAH (64 aa)) form the bZIP domain. The interval 334–354 (RRQRFLERNRAAASRCRQKRK) is basic motif. A leucine-zipper region spans residues 360–388 (LEKKAEELTSQNIQLSNEVTLLRNEVAQL).

Belongs to the bZIP family. In terms of assembly, homodimer; binds DNA as homodimer. Heterodimer; heterodimerizes with other members of ATF family and with JUN family members. Interacts with JNK2; the interaction does not phosphorylate ATF7 but acts as a docking site for other ATF-associated partners such as JUN family members. Interacts (via its transactivation domain) with TAF12 the interaction potentiates the transactivation activity and is inhibited by ATF7 sumoylation. Interacts with TAF4; the interaction inhibits the TAF12-dependent transactivation. Interacts with MAPK9; the interaction does not phosphorylate ATF7 but acts as a docking site for ATF7-associated partners such as JUN. Interacts with Ku complex components XRCC6 and XRCC7. Interacts with TERT. In terms of processing, on EGF stimulation, phosphorylated first on Thr-53 allowing subsequent phosphorylation on Thr-51. This latter phosphorylation prevents sumoylation, increases binding to TAF12 and enhances transcriptional activity. Social isolation stress as well as TNF-alpha also induce the phosphorylation of ATF7. Phosphorylated in proliferating colonic and small intestinal epithelial cells. Post-translationally, sumoylation delays nuclear localization and inhibits transactivation activity through preventing binding to TAF12. RANBP2 appears to be the specific E3 ligase.

The protein localises to the nucleus. The protein resides in the nucleoplasm. Its subcellular location is the chromosome. It localises to the telomere. Stress-responsive chromatin regulator that plays a role in various biological processes including innate immunological memory, adipocyte differentiation or telomerase regulation. In absence of stress, contributes to the formation of heterochromatin and heterochromatin-like structure by recruiting histone H3K9 tri- and di-methyltransferases thus silencing the transcription of target genes such as Htr5b, STAT1 in adipocytes, or genes involved in innate immunity in macrophages and adipocytes. Phosphorylation of ATF7 disrupts interactions with histone methyltransferase and enhances the association with coactivators containing histone acetyltransferase and/or histone demethylase, leading to disruption of the heterochromatin-like structure and subsequently transcriptional activation. In response to TNF-alpha, which is induced by various stresses, phosphorylated ATF7 and telomerase are released from telomeres leading to telomere shortening. Also plays a role in maintaining epithelial regenerative capacity and protecting against cell death during intestinal epithelial damage and repair. In Mus musculus (Mouse), this protein is Cyclic AMP-dependent transcription factor ATF-7 (Atf7).